The following is a 3707-amino-acid chain: MTVLYLVKDYIEVVHKLIETSPSHVLQHSTYNDSLTIINFGLSTLKQLCSNFFSFEWLKQLWYFPIIVPEIATSMMEEISVLDGNFHNILSFLDKPVAVGNEIYGDYYLPLTCFEKIFTGLVNSLFIWIPTSTATFLCFRRFIMQGVEAGYAAALGTMAATVFWLASILFGLRFIVVPWMSLDLFRYWLGFLLLMKYFWDNRYAYKEVKHNSVFGKKTKRNIFGFHFLLALTEQTSLYPFLSNFSISSQSTLLEGFPSENILDFSLIHFSYLLGIGIGSYSLINLICWFWQDPAYRFYFWMMNKFKKLRIADIVRPVHLFFQSITVLFAFSSLPYFGIEYQITNPLGFLPNDQAFHQFKQTSFLTHPTSPAYYRSRLNFPRQKFFRYEDWAEYYHRNTPLDTSLYDQGAYRLYTMEDLSYGKDYEWMRRRSDKIKIRSRLKRLRWFPRNWANRLWEFTKTWSRRNVLWRNDILNMYQYSWDSKAPIIWNKLVFEEFFPTTFGQQKSFSRKETELKKHLGSEVLFSSTKKPISTNWDSFWGPDPDWTSKFLWNQNSLNNKEKQLWFNWQSRLNLTDNDTWWKWLVTNGSKSKAETLSFQNIIPQFSNKIQKGDFWEPQKRLISIYSENSQKKELVLESSTLRKFVRKLSARFKLAQIDKVSQLNNAEKKEVKTSFFLQPLNNGIWYNSNTLSSNSLKTLLLTPSFRDWTVFQTVMTNMNRILWWRRLTNASKSKSTDLSGKLSYQFDPKMKLKTLNQRLDGKKEEAKASSFLQLSTFSKPNNFLSNSALNNFKRFVKTQKLSYSENKFAKIQNKYLEIQMKQNLLINSNSSNKNNLSSLFSPSKTIEQFENKELKKETSSSLLPFAISPLSQSKNYKNMEINNLKVLNGKKSGAKWEKEKSLRRGKKLSFFPLLPISSLSPREKSSFSLEERENMGHFPPEAKLPGEPSFAFPTLFLTKKNNNKFILFKNKNKVNVNKWVPLNSVDVSSTLLHPLKYYLHKEQNFKRKLSFYGVKNKILSKSIKDSSSILNENGNERKAGALATNFSSQETKISSFPQNVSKTSSTDLFYSTYNTGSSLKSYPEATINQNQNWNSLSLKKNNYSEKLFPITKNKNKLPIFNFYLKTYFQTYKKTKLYVLNTKMKRQLGMGASARRKGRDYSNKLLKRSKILSNTPWIRQWIDQSGFLARRKRLETWIARQHYDPNELWSKIMKVDVDLFMNRQPSYYFLTNTEEKLLHLRRFLLFEHYDSLRWYTYMTNYRTMKNTIGGTKSFTNRMYNQQFKGTFHKVRHLFSLTPSSSNGSLLKFDRPLYNLEKTNQSSLTSQAHEELQNFTNFLKHDDNVLSEIDDFREKLLEKKAKAFFSNNDGEKSEAKASTVPQSFLNKSIGKMQENQSDASFFKASPTLEKNSIFSSETFLSSFEKRPMDLIEKSTQTLQQSIWENNLIRKNYISFLLEQKNYDLLTKFLVSNTLYTPESIKTKNYEKWEKDVSLRKEEDLTSSFSPSRLSLLKKNSTLRINKSIKTNLQTKLMISLFRKRQKWTRDYKRASEKLWKKWKLRSKLISNKTLYLLSNDKTNELNLPQLRTQLYSDQKQEKIVAPVTNPNYYGKNISTLDKKFLQIIKLKKLTEIIKSQDGKKEEAQEGSKPKLASFSHSSFLSLSSFNHNNTVVKEKAFSSMNNSTLSYLNRFNYNSVIGKALKEAIEIQYVSQGKTEKKQLNGKKETPDVSFDNIKILKRNIDLKNIFNNNIFTKKMIKDMYKNSFKHKKLSIAGAFQSKKSSTSLWTNSFLDYKLQNRLDNRFYNTSRNKLKSDEMNTKLLTQTNLQLYQKNLIRRERSNIQNFVFMKKFLLNDYNSPLTRSQIRPLPGKRTKALYEKSTASGSYSSNLIRKNNPFLSSINDIDLKILAYKNRKWVESVKTDNNLFQEKVDGKKKVAKATFFPSLSVSKLNNNWKLFLNKIKKSPKLVSGQMDQTLQTKMINEQNLMKGVRLSAQLSPILTNAITNNISKNALKKEIKTVFLMNEKSAGTVLEDSSVLKNFVRQKLTKTILSKQKIINSLEKPTIIRITKSLRKRQQDRIVRSLLKRHLNLKSRRKLFLKTKEINNQRMSLDRKYEIEERLFLNKISYFAELKQLLDLNNNSLSKDSIFKGKNEFVLANKNLLKINSFKNENNVANRDNLGSEEWEKERSLSFFPSKASFFNSSLDFPSKQQNFQLTESGKFTKSKNLVENFVIWLSLSNNKNLDSFSPLTEFSERQMKEKSQSSRLFSITNRRNEKNIVKNLKNKKVTVSIIKNFQNKGKQMGERKKFQLFPFKSFFSSPHFIDMFYLRKKEGIFFTKEKISGNVAESEKMRAGDKQSYLSSIKRSSLFINKLLTNNQNNRQNQNNESYLSFKLKQNFVNFSVLENEKNILRRSLRKFISPNSMPPFLFEKMRRGGEDQFYKSTRKYSEKFKPITNATKRKNSFVNNFLLKNWIRLKNLQKEKEESFSSPLSFSYNLNNNKNNKTDIKEKNNRLLSSFVFEKMGQKNSSKEELINLNKYIIFARTNQNKLSRQQMRKKLKKRRIIRLKRNDRLKTLRDHPLKFRSEQIQTFYNIRDSLKKWKNFSFISSKVKYNKAFWTGYNNRQLFSNTSGLNSKANTFSFPQTNIQVATFNDNLESQSRNYKPLLDNGKKSRAFPASEACGKLGKNCIFPLEKVNKLKLIDFSHRSVQPLKSKNYLQSLNLQKSEELNQKAGAKTQDFYSASLPFLENTLSPFYTNGYLSFSDSFENKNILNSDLFYTLYQDIFINSPAFNKIGLKSKSTDFFFQTNQLENSLNSKLLVNNTNMPFYAGWDDSVRKFVLTNRLLTRKEAGYEISNIFNKKNESQKFDIYSSVDKKLNNTNNVVFSSWPLKGKNAATTLFSQFPFMTAPETNVNNSDKQIRVVKAGTKYIIEGLTNSTKFNKDTSSFDNKWIQKNKNHLIKDKNNIKEIKGSIASDFSPNINFKKNKRIKTIIKSSKNEDQIGIRQTGQVISNLATATSRKTARRALFSSRPWRSKRQTTKAILFSLSQKDNQSSLNVRKNPKLFLSLNSKKEFMDTKLSSKLLLLRNLRHGNRSQTKLAYLRRLQNFIRPTGSAWKTTLNLSRRKKQRIKQSNFFSSRFSVRKRKKRGNNKNPRLRGDKNYKKTKRQYRQKLYLRPKNKPLRRRSLGVAFQNKLNYWRRQYQNLSTNQNSGLKDKVQLLNKQALNCASTNPNCFNVPSEIDDFRGKFLGKKALAFFPKNDGKILFSQNLKENLVYSQKDNEWTSSRRPRKLYRSLFKNPSRQNPILYSTLPGHSRSIPIIKNLPLPGSSVKTLNRIIKWSSADGAARFYRVNLSYGWAMELFLQNLHQKIKSKNNYLINGNKSEAEVSAFPLIKEYLNQLVNTNKNKFSSSRVFKRRFYKLRQLSYTMSLRLYDRWFFYYYKTGNSGEQSNGNSNFQEKTGREPIPISTFSRNRFNNQIKQVVLAVPSLSSMEPDLSQFKHIKKFLTFHLNENQSNFRSYLKNLRTTSYLKTQSITTEITPKLSNSGITDNSNKIENYDSPLLGDARTKDFDGLESFKLVSTGREEAEASSPFSRQKPGFEKSDLSKSGQFPEDKMNLVKSNKTLLKKEKKYAEDRFFFAQFNKPPLVDDSRLTFENNRHFPLNGGFVWPGDYLRLKTILLPKEMKDLYLLEKNKNFNGKKSGAKAI.

The next 6 helical transmembrane spans lie at 117 to 137 (IFTG…ATFL), 152 to 172 (AAAL…LFGL), 174 to 194 (FIVV…FLLL), 222 to 242 (IFGF…PFLS), 269 to 289 (FSYL…ICWF), and 318 to 338 (HLFF…YFGI). 2 disordered regions span residues 3139–3164 (FSVR…YKKT) and 3583–3612 (GREE…GQFP). Positions 3140–3149 (SVRKRKKRGN) are enriched in basic residues.

The protein belongs to the ycf78 family.

Its subcellular location is the plastid. It is found in the chloroplast membrane. This is an uncharacterized protein from Stigeoclonium helveticum (Green alga).